Reading from the N-terminus, the 821-residue chain is Calpain-3 (821 aa).

The disordered stretch occupies residues 1–37; sequence MPTVISPTVAPRTGAEPRSPGPVPHPAQGKTTEAGGG. One can recognise a Calpain catalytic domain in the interval 74–417; sequence LYLDPEFPPD…FTKLEICNLT (344 aa). Residues Cys-129, His-334, and Asn-358 contribute to the active site. Positions 418–586 are domain III; that stretch reads ADALESDKLQ…KRNLSEEAEN (169 aa). Residues 587 to 649 form a linker region; that stretch reads TISVDRPVKK…RPGHTDQESE (63 aa). Residues 603 to 651 are disordered; the sequence is IFVSDRANSNKELGVDQEAEEGKDKTGPDKQGESPQPRPGHTDQESEEQ. Positions 622–634 are enriched in basic and acidic residues; that stretch reads EEGKDKTGPDKQG. EF-hand domains are found at residues 649–683, 692–725, 722–757, and 787–821; these read EEQQ…VVNK, FTLE…KKIK, KKIK…AGFH, and VRLE…TMYA. The domain IV stretch occupies residues 650–820; it reads EQQQFRNIFR…VLEWLQLTMY (171 aa). Ca(2+) contacts are provided by Ala-662, Asp-665, Glu-667, Glu-672, Asp-705, Asp-707, Ser-709, Arg-711, Glu-716, Asp-735, Asp-737, Ser-739, Thr-741, Glu-746, Asp-800, Asp-802, Asp-804, and Ile-806.

The protein belongs to the peptidase C2 family. Homodimer; via EF-hand domain 4. Interacts with TTN/titin. Interacts with CMYA5; this interaction, which results in CMYA5 proteolysis, may protect CAPN3 from autolysis. Interacts with SIMC1. Interacts with UTP25; the interaction is required for CAPN3 translocation to the nucleolus. Skeletal muscle.

It localises to the cytoplasm. Its subcellular location is the nucleus. The protein resides in the nucleolus. It carries out the reaction Broad endopeptidase activity.. Activated by micromolar concentrations of calcium and inhibited by calpastatin. Its function is as follows. Calcium-regulated non-lysosomal thiol-protease. Proteolytically cleaves CTBP1 at 'His-399'. Mediates, with UTP25, the proteasome-independent degradation of p53/TP53. This is Calpain-3 (Capn3) from Rattus norvegicus (Rat).